The primary structure comprises 247 residues: ATP synthase subunit a, chloroplastic (247 aa).

5 consecutive transmembrane segments (helical) span residues 38–58 (QVLI…IIAV), 95–115 (VPFI…GALL), 134–154 (INTT…AGLT), 199–219 (LVVV…VMFL), and 220–240 (GLFT…AYIG).

Belongs to the ATPase A chain family. F-type ATPases have 2 components, CF(1) - the catalytic core - and CF(0) - the membrane proton channel. CF(1) has five subunits: alpha(3), beta(3), gamma(1), delta(1), epsilon(1). CF(0) has four main subunits: a, b, b' and c.

The protein localises to the plastid. It localises to the chloroplast thylakoid membrane. Its function is as follows. Key component of the proton channel; it plays a direct role in the translocation of protons across the membrane. The sequence is that of ATP synthase subunit a, chloroplastic from Dioscorea elephantipes (Elephant's foot yam).